A 163-amino-acid polypeptide reads, in one-letter code: Norbelladine synthase (163 aa).

68–71 (YHKE) is a binding site for tyramine. Lysine 83 (proton donor) is an active-site residue.

It belongs to the BetVI family. As to expression, mostly expressed in bulbs, and, to a lower extent, in roots, stems, leaves and flowers.

It carries out the reaction 3,4-dihydroxybenzaldehyde + tyramine + AH2 = norbelladine + A + H2O. It functions in the pathway alkaloid biosynthesis. Catalyzes the condensation of tyramine and 3,4-dihydroxybenzaldehyde (3,4-DHBA) to form norbelladine, the common precursor to all Amaryllidaceae alkaloids such as galanthamine, lycorine and haemanthamine, and including haemanthamine- and crinamine-type alkaloids, promising anticancer agents. The sequence is that of Norbelladine synthase from Narcissus pseudonarcissus (Daffodil).